The chain runs to 330 residues: mRNA-capping enzyme (330 aa).

The active-site N6-GMP-lysine intermediate is Lys82.

It belongs to the eukaryotic GTase family. As to quaternary structure, monomer. It depends on Mg(2+) as a cofactor. The cofactor is Mn(2+).

The enzyme catalyses a 5'-end diphospho-ribonucleoside in mRNA + GTP + H(+) = a 5'-end (5'-triphosphoguanosine)-ribonucleoside in mRNA + diphosphate. Functionally, mRNA capping. Transfers a GMP cap onto the end of mRNA that terminates with a 5'-diphosphate tail. The protein is mRNA-capping enzyme of Chlorella (PBCV-1).